The sequence spans 403 residues: Zinc metalloproteinase nas-8 (403 aa).

The first 29 residues, 1–29, serve as a signal peptide directing secretion; the sequence is MRRNDLLNNKITIFLSSLSLFVIIIPIYA. The propeptide occupies 30 to 111; that stretch reads AEKDLLPPST…DPKNSESLRR (82 aa). Positions 112–307 constitute a Peptidase M12A domain; it reads NGVITGTRKW…LKMNLMYQCS (196 aa). 5 disulfide bridges follow: Cys-154-Cys-306, Cys-176-Cys-195, Cys-338-Cys-372, Cys-345-Cys-365, and Cys-352-Cys-369. His-203 is a Zn(2+) binding site. Residue Glu-204 is part of the active site. Zn(2+) is bound by residues His-207 and His-213. The ShKT domain maps to 338 to 372; it reads CRDRTNLCWRWIDRCKSFFFEQIMKEFCSLSCGYC. Asn-386 carries an N-linked (GlcNAc...) asparagine glycan.

Requires Zn(2+) as cofactor.

The protein resides in the secreted. The catalysed reaction is Hydrolysis of peptide bonds in substrates containing five or more amino acids, preferentially with Ala in P1', and Pro in P2'.. In terms of biological role, metalloprotease. This Caenorhabditis elegans protein is Zinc metalloproteinase nas-8 (nas-8).